A 240-amino-acid chain; its full sequence is Glutathione S-transferase theta-1 (240 aa).

A GST N-terminal domain is found at 2–82; it reads VLELYLDLLS…YLAHKYKVPD (81 aa). Glutathione is bound by residues His40, 53–54, and 66–67; these read KV and ES. The region spanning 88 to 223 is the GST C-terminal domain; it reads DLQARARVDE…ILKVRDCPPA (136 aa).

It belongs to the GST superfamily. Theta family. Homodimer. In terms of tissue distribution, in liver, highest expression found in central vein limiting plate hepatocytes. In lung, expressed mainly in club cells of the bronchiolar epithelium and, at low levels, in type II alveolar cells.

The protein resides in the cytoplasm. It carries out the reaction RX + glutathione = an S-substituted glutathione + a halide anion + H(+). In terms of biological role, conjugation of reduced glutathione to a wide number of exogenous and endogenous hydrophobic electrophiles. Also binds steroids, bilirubin, carcinogens and numerous organic anions. Has dichloromethane dehalogenase activity. The sequence is that of Glutathione S-transferase theta-1 (Gstt1) from Rattus norvegicus (Rat).